The chain runs to 610 residues: Calcium-dependent protein kinase 1 (610 aa).

A lipid anchor (N-myristoyl glycine) is attached at Gly2. Residue Cys5 is the site of S-palmitoyl cysteine attachment. The disordered stretch occupies residues 17 to 133; the sequence is VSAAMWRPRD…HMKRVSSAGL (117 aa). Composition is skewed to basic and acidic residues over residues 47–56 and 70–117; these read LRSRLSDEVQ and TDVE…DPPA. Over residues 118-127 the composition is skewed to basic residues; that stretch reads KPKKPKHMKR. The Protein kinase domain occupies 150–408; sequence YSLGRKLGQG…AHQVLCHPWV (259 aa). ATP-binding positions include 156 to 164 and Lys179; that span reads LGQGQFGTT. The Proton acceptor role is filled by Asp274. Phosphoserine is present on Ser314. Residues 414–444 are autoinhibitory domain; sequence APDKPLDSAVLSRMKQFSAMNKFKKMALRVI. 4 consecutive EF-hand domains span residues 451 to 486, 487 to 522, 523 to 558, and 559 to 592; these read EEIA…VGAN, LKES…LNKI, ERED…FGVE, and DVRI…GSIT. Positions 464, 466, 468, 470, 475, 500, 502, 504, 506, 511, 536, 538, 540, 542, 547, 570, 572, 574, 576, and 581 each coordinate Ca(2+).

This sequence belongs to the protein kinase superfamily. Ser/Thr protein kinase family. CDPK subfamily. As to quaternary structure, interacts with 14-3-3 proteins.

The protein resides in the peroxisome membrane. The enzyme catalyses L-seryl-[protein] + ATP = O-phospho-L-seryl-[protein] + ADP + H(+). It catalyses the reaction L-threonyl-[protein] + ATP = O-phospho-L-threonyl-[protein] + ADP + H(+). Its activity is regulated as follows. Activated by calcium. Autophosphorylation may play an important role in the regulation of the kinase activity. In terms of biological role, may play a role in signal transduction pathways that involve calcium as a second messenger. Phosphorylates the Ca(2+)-ATPase ACA2 resulting in the inhibition of its calcium activation. In Arabidopsis thaliana (Mouse-ear cress), this protein is Calcium-dependent protein kinase 1 (CPK1).